The following is a 430-amino-acid chain: C4-dicarboxylate transport protein (430 aa).

Transmembrane regions (helical) follow at residues 8–28 (SLYF…HFYP), 44–64 (LIKM…IAGM), 76–96 (IALL…LVIV), 144–164 (AFAS…GFAL), 184–204 (VIFG…FGAM), 222–242 (LIIC…GSIA), 289–309 (VVGL…SIYL), 326–346 (VIHQ…AAGV), and 352–372 (IVLA…LALI).

It belongs to the dicarboxylate/amino acid:cation symporter (DAACS) (TC 2.A.23) family.

Its subcellular location is the cell inner membrane. In terms of biological role, responsible for the transport of dicarboxylates such as succinate, fumarate, and malate from the periplasm across the membrane. This chain is C4-dicarboxylate transport protein, found in Yersinia enterocolitica serotype O:8 / biotype 1B (strain NCTC 13174 / 8081).